A 92-amino-acid chain; its full sequence is Large ribosomal subunit protein bL28 (92 aa).

Belongs to the bacterial ribosomal protein bL28 family.

In Borrelia garinii subsp. bavariensis (strain ATCC BAA-2496 / DSM 23469 / PBi) (Borreliella bavariensis), this protein is Large ribosomal subunit protein bL28.